Reading from the N-terminus, the 1482-residue chain is Cystic fibrosis transmembrane conductance regulator (1482 aa).

Residues 1–77 (MQRSPLEKAS…KLINALRRCF (77 aa)) are Cytoplasmic-facing. Residues 78–98 (FWRFMFYGIILYLGEVTKAVQ) traverse the membrane as a helical segment. The region spanning 81-365 (FMFYGIILYL…WAVQTWYDSL (285 aa)) is the ABC transmembrane type-1 1 domain. Topologically, residues 99–122 (PLLLGRIIASYDPDNKAERSIAIY) are extracellular. A helical membrane pass occupies residues 123 to 146 (LGVGLCLLFIVRTLLLHPAIFGPH). The Cytoplasmic portion of the chain corresponds to 147 to 195 (HIGMQMRIAMFSLIYKKTLKLSSRVLDKISIGQLVSLLSNNLNKFDEGL). The chain crosses the membrane as a helical span at residues 196 to 216 (ALAHFVWIAPLQVTLLMGLLW). Residues 217–222 (ELLQAS) lie on the Extracellular side of the membrane. A helical transmembrane segment spans residues 223–243 (AFCGLAFLVVLALFQAGLGKM). At 244–298 (MMKYRDQRAGKINERLVITSEMIENIQSVKAYCWEEAMEKMIENLRQTELKLTRK) the chain is on the cytoplasmic side. Residues 299 to 319 (AAYVRYFNSSAFFFSGLFVVF) form a helical membrane-spanning segment. At 320–339 (LSVLPYALLKGIMLRKIFTT) the chain is on the extracellular side. Residues 340 to 358 (ISFCIVLRMAVTRQFPWAV) traverse the membrane as a helical segment. Over 359-859 (QTWYDSLGAI…YLRYVTVHKS (501 aa)) the chain is Cytoplasmic. Residues W401, S434, 458 to 465 (GSTGAGKT), and Q493 each bind ATP. Residues 423–646 (NGDNSLFFSN…RPDFSSKLMG (224 aa)) enclose the ABC transporter 1 domain. A lipid anchor (S-palmitoyl cysteine) is attached at C524. 2 positions are modified to phosphoserine: S549 and S660. Residues 654 to 832 (TAERRNSIIT…EEINEEDLRE (179 aa)) form a disordered R region region. S670 is modified (phosphoserine; by PKA). A Phosphoserine modification is found at S686. K688 is covalently cross-linked (Glycyl lysine isopeptide (Lys-Gly) (interchain with G-Cter in ubiquitin)). Phosphoserine occurs at positions 700 and 712. T717 is modified (phosphothreonine). Residues S737, S768, S791, S796, and S814 each carry the phosphoserine modification. The helical transmembrane segment at 860-880 (LIFVLIWCLVVFLAEVAACLV) threads the bilayer. Residues 860–1156 (LIFVLIWCLV…AVNSSIDVDS (297 aa)) enclose the ABC transmembrane type-1 2 domain. Over 881–919 (VLCLLKKTSPQDKGNSTKGANNSYAVIITSTSAYYVFYI) the chain is Extracellular. 2 N-linked (GlcNAc...) asparagine glycosylation sites follow: N895 and N901. A discontinuously helical membrane pass occupies residues 920–940 (YVGVADGLLALGLFRGLPLVH). The Cytoplasmic portion of the chain corresponds to 941–991 (TLITVSKILHRKMLHSVLQAPMSTLNTLKAGGILNRFSKDIAVLDDLLPLT). A helical transmembrane segment spans residues 992 to 1012 (IFDFIQLLLIVIGAVAVVSVL). Topologically, residues 1013-1014 (KP) are extracellular. The helical transmembrane segment at 1015–1035 (YIFLATVPVIVAFILLRAYFL) threads the bilayer. Residues 1036–1096 (HTSQQLKQLE…TANWFLYLST (61 aa)) lie on the Cytoplasmic side of the membrane. Residues 1097–1117 (LRWFQMRIEMIFVIFFIAVTF) traverse the membrane as a helical segment. At 1118 to 1131 (ISILTTGEGEGTVG) the chain is on the extracellular side. A helical transmembrane segment spans residues 1132-1152 (IILTLAMNIMSTLQWAVNSSI). The Cytoplasmic segment spans residues 1153–1482 (DVDSLMRSVS…TEEEVQETRL (330 aa)). The 234-residue stretch at 1212-1445 (MTVKDLTAKY…KSLFRQAISP (234 aa)) folds into the ABC transporter 2 domain. ATP-binding positions include Y1221 and 1246–1253 (GRTGSGKS). The interaction with GORASP2 stretch occupies residues 1388 to 1482 (RTLKQAFADC…TEEEVQETRL (95 aa)). C1397 carries the S-palmitoyl cysteine lipid modification. The segment covering 1454 to 1464 (HRNSSKQRSRS) has biased composition (basic residues). The tract at residues 1454 to 1482 (HRNSSKQRSRSKIAALKEETEEEVQETRL) is disordered. Position 1458 is a phosphoserine (S1458). Acidic residues predominate over residues 1472 to 1482 (ETEEEVQETRL). Residues 1480–1482 (TRL) carry the PDZ-binding motif.

This sequence belongs to the ABC transporter superfamily. ABCC family. CFTR transporter (TC 3.A.1.202) subfamily. In terms of assembly, monomer; does not require oligomerization for channel activity. May form oligomers in the membrane. Interacts with SLC26A3, SLC26A6 and NHERF1. Interacts with SHANK2. Interacts with MYO6. Interacts (via C-terminus) with GOPC (via PDZ domain); this promotes CFTR internalization and thereby decreases channel activity. Interacts with SLC4A7 through NHERF1. Found in a complex with MYO5B and RAB11A. Interacts with ANO1. Interacts with SLC26A8. Interacts with AHCYL1; the interaction increases CFTR activity. Interacts with CSE1L. The core-glycosylated form interacts with GORASP2 (via PDZ GRASP-type 1 domain) in respone to ER stress. Interacts with MARCHF2; the interaction leads to CFTR ubiqtuitination and degradation. Interacts with ADGRG2. N-glycosylated. Post-translationally, phosphorylated; cAMP treatment promotes phosphorylation and activates the channel. Dephosphorylation decreases the ATPase activity (in vitro). Phosphorylation at PKA sites activates the channel. Phosphorylation at PKC sites enhances the response to phosphorylation by PKA. Phosphorylated by AMPK; this inhibits channel activity. In terms of processing, ubiquitinated, leading to its degradation in the lysosome. Deubiquitination by USP10 in early endosomes enhances its endocytic recycling to the cell membrane. Ubiquitinated by RNF185 during ER stress. Ubiquitinated by MARCHF2.

Its subcellular location is the apical cell membrane. The protein resides in the early endosome membrane. It is found in the cell membrane. The protein localises to the recycling endosome membrane. It localises to the endoplasmic reticulum membrane. Its subcellular location is the nucleus. It carries out the reaction ATP + H2O + closed Cl(-) channel = ADP + phosphate + open Cl(-) channel.. The catalysed reaction is chloride(in) = chloride(out). It catalyses the reaction hydrogencarbonate(in) = hydrogencarbonate(out). The enzyme catalyses ATP + H2O = ADP + phosphate + H(+). Its function is as follows. Epithelial ion channel that plays an important role in the regulation of epithelial ion and water transport and fluid homeostasis. Mediates the transport of chloride ions across the cell membrane. Possesses an intrinsic ATPase activity and utilizes ATP to gate its channel; the passive flow of anions through the channel is gated by cycles of ATP binding and hydrolysis by the ATP-binding domains. The ion channel is also permeable to HCO(3)(-); selectivity depends on the extracellular chloride concentration. Exerts its function also by modulating the activity of other ion channels and transporters. Contributes to the regulation of the pH and the ion content of the epithelial fluid layer. Modulates the activity of the epithelial sodium channel (ENaC) complex, in part by regulating the cell surface expression of the ENaC complex. May regulate bicarbonate secretion and salvage in epithelial cells by regulating the transporter SLC4A7. Can inhibit the chloride channel activity of ANO1. Plays a role in the chloride and bicarbonate homeostasis during sperm epididymal maturation and capacitation. This chain is Cystic fibrosis transmembrane conductance regulator, found in Sus scrofa (Pig).